We begin with the raw amino-acid sequence, 432 residues long: Trigger factor (432 aa).

The 86-residue stretch at 161–246 folds into the PPIase FKBP-type domain; it reads GKRVSIDFVG…VNKVEARQLP (86 aa).

It belongs to the FKBP-type PPIase family. Tig subfamily.

The protein localises to the cytoplasm. The enzyme catalyses [protein]-peptidylproline (omega=180) = [protein]-peptidylproline (omega=0). In terms of biological role, involved in protein export. Acts as a chaperone by maintaining the newly synthesized protein in an open conformation. Functions as a peptidyl-prolyl cis-trans isomerase. This Vibrio vulnificus (strain YJ016) protein is Trigger factor.